A 361-amino-acid chain; its full sequence is Cysteine-rich with EGF-like domain protein 2-A (361 aa).

The signal sequence occupies residues 1–24 (MNGSRALHLSAWLLLCLLCSAAVA). The region spanning 134 to 176 (DCLACLGGSERPCHGNGFCNGDGTRSGDGLCRCEAEYTGPFCL) is the EGF-like 1 domain. Intrachain disulfides connect Cys138–Cys152, Cys146–Cys164, and Cys166–Cys175. An N-linked (GlcNAc...) asparagine glycan is attached at Asn188. 2 FU repeats span residues 191–238 (YSLC…EESP) and 251–298 (SFLC…SEQV). Positions 288–329 (DVDECDASEQVCSRENETCLNTAGSYKCTCSEGFEDKEGNCV) constitute an EGF-like 2; calcium-binding domain. 3 cysteine pairs are disulfide-bonded: Cys292/Cys306, Cys299/Cys315, and Cys317/Cys328. N-linked (GlcNAc...) asparagine glycosylation is present at Asn303. The disordered stretch occupies residues 341-361 (DGEMGTSASDINISNTAHEDL). Over residues 346–361 (TSASDINISNTAHEDL) the composition is skewed to polar residues. An N-linked (GlcNAc...) asparagine glycan is attached at Asn352.

The protein belongs to the CRELD family.

The protein localises to the secreted. It is found in the endoplasmic reticulum. Functionally, possible role in neuronal acetylcholine receptor transport. This chain is Cysteine-rich with EGF-like domain protein 2-A (creld2-a), found in Xenopus laevis (African clawed frog).